The following is a 400-amino-acid chain: LIM homeobox transcription factor 1-beta.1 (400 aa).

LIM zinc-binding domains lie at 54–113 and 114–175; these read AVCE…LFAA and KCSG…EKDL. The interval 175–228 is disordered; sequence LLSSGSPDDSDSVKSDDEEGDVKPGKGRVNQGKGSDDGKDPRRPKRPRTILTTQ. The segment at residues 218 to 277 is a DNA-binding region (homeobox); the sequence is PKRPRTILTTQQRRAFKASFEVSSKPCRKVRETLAAETGLSVRVVQVWFQNQRAKIKKLA.

As to expression, shows a temporal expression pattern in three main areas: neural, kidney and limbs. From stage 13 onwards, expressed in regions of the nervous system including the placodes and otic vesicles, eye, specific sets of neurons, and in discreet regions of the neural tube. From stage 13, also expressed in the presumptive pronephros, and from stage 27 expression is predominant in the capsule of the pronephric glomus. Also expressed in the developing forelimbs and hindlimbs. In metamorphosing tadpoles, expressed in the eye, brain, muscle and mesonephric kidney.

It is found in the nucleus. In terms of biological role, required for early specification of the kidney glomus, lying upstream of wt1 in the pathway controlling glomus differentiation. The balance in levels and expression patterns of binding partners such as lhx1/lim-1 influences differentiation into glomus or tubule derivatives. Involved in specification of serotonergic neurons. In Xenopus laevis (African clawed frog), this protein is LIM homeobox transcription factor 1-beta.1.